Consider the following 211-residue polypeptide: MKKGLMISFEGPDGAGKTTVLEAVLPLLREKLSQDILTTREPGGVTISEEIRHIILDVKHTQMDKKTELLLYMAARRQHLVEKVLPALEEGKIVLMDRFIDSSVAYQGSGRGLDKSHIKWLNDYATDSHKPDLTLYFDVPSEVGLERIQKSVQREVNRLDLEQLDMHQRVRQGYLELADSEPNRIVTIDASQQLDEVIAETFSIILDRINQ.

Residue 11–18 (GPDGAGKT) coordinates ATP.

The protein belongs to the thymidylate kinase family.

The catalysed reaction is dTMP + ATP = dTDP + ADP. Functionally, phosphorylation of dTMP to form dTDP in both de novo and salvage pathways of dTTP synthesis. The chain is Thymidylate kinase from Streptococcus agalactiae serotype Ia (strain ATCC 27591 / A909 / CDC SS700).